We begin with the raw amino-acid sequence, 365 residues long: MLMSKEDESQMTFSMLPDDLVLNCLARVSKVYYPSLSFVSKKFRSLIASTELQELRSFLGCTSSGLYVCLRFRTNTDYRQICFTLRQKISSSAKILVPISSLDSPFDYRSGVVAVGSDIYAIGGRNLNNSASSKVMVMDCRSHTWREAPSMRVARDDFPSTCVLNGKIYVIGGCKNLDSTNWIEVFDTKTQTWEFLQIPNEEVCRGFNYKIVGYKEAIHVSSLENNRATFMTYEIHKGRWREPHLSLSHGFHFSNCVIENVFYRYSYEMLQWYDSCRKIWKNLKGFVRRSIMNPRGEGVKMVNYGGNIVLLWEECVTIKKKLIWCEEVVIEKKHQGEIWGLLKWSDVVFITDEKNQLVRALAPDV.

The F-box domain maps to 10 to 58 (QMTFSMLPDDLVLNCLARVSKVYYPSLSFVSKKFRSLIASTELQELRSF). Kelch repeat units lie at residues 118-165 (DIYA…CVLN) and 167-213 (KIYV…KIVG).

The chain is Putative F-box/kelch-repeat protein At4g39290 from Arabidopsis thaliana (Mouse-ear cress).